A 458-amino-acid polypeptide reads, in one-letter code: Serine--tRNA ligase (458 aa).

252 to 254 (TAE) provides a ligand contact to L-serine. Residues 283-285 (RKE) and Val-299 each bind ATP. Glu-306 contributes to the L-serine binding site. Residue 370–373 (EMVS) coordinates ATP. Thr-405 is an L-serine binding site.

It belongs to the class-II aminoacyl-tRNA synthetase family. Type-1 seryl-tRNA synthetase subfamily. As to quaternary structure, homodimer. The tRNA molecule binds across the dimer.

It localises to the cytoplasm. The catalysed reaction is tRNA(Ser) + L-serine + ATP = L-seryl-tRNA(Ser) + AMP + diphosphate + H(+). The enzyme catalyses tRNA(Sec) + L-serine + ATP = L-seryl-tRNA(Sec) + AMP + diphosphate + H(+). It functions in the pathway aminoacyl-tRNA biosynthesis; selenocysteinyl-tRNA(Sec) biosynthesis; L-seryl-tRNA(Sec) from L-serine and tRNA(Sec): step 1/1. Functionally, catalyzes the attachment of serine to tRNA(Ser). Is also able to aminoacylate tRNA(Sec) with serine, to form the misacylated tRNA L-seryl-tRNA(Sec), which will be further converted into selenocysteinyl-tRNA(Sec). The sequence is that of Serine--tRNA ligase from Sulfolobus acidocaldarius (strain ATCC 33909 / DSM 639 / JCM 8929 / NBRC 15157 / NCIMB 11770).